A 104-amino-acid chain; its full sequence is Elicitor peptide 6 (104 aa).

The propeptide occupies Met1 to Arg81. Low complexity predominate over residues Ser48–Ser61. A disordered region spans residues Ser48–Asn104. The span at Val63–Glu74 shows a compositional bias: acidic residues.

It belongs to the brassicaceae elicitor peptide family.

Its function is as follows. Elicitor of plant defense. This is Elicitor peptide 6 (PEP6) from Arabidopsis thaliana (Mouse-ear cress).